The following is a 427-amino-acid chain: Enolase (427 aa).

Residue Gln163 coordinates (2R)-2-phosphoglycerate. Glu205 functions as the Proton donor in the catalytic mechanism. Mg(2+) contacts are provided by Asp242, Glu283, and Asp310. Lys335, Arg364, Ser365, and Lys386 together coordinate (2R)-2-phosphoglycerate. The active-site Proton acceptor is the Lys335.

This sequence belongs to the enolase family. The cofactor is Mg(2+).

It is found in the cytoplasm. Its subcellular location is the secreted. It localises to the cell surface. It carries out the reaction (2R)-2-phosphoglycerate = phosphoenolpyruvate + H2O. It participates in carbohydrate degradation; glycolysis; pyruvate from D-glyceraldehyde 3-phosphate: step 4/5. Its function is as follows. Catalyzes the reversible conversion of 2-phosphoglycerate (2-PG) into phosphoenolpyruvate (PEP). It is essential for the degradation of carbohydrates via glycolysis. The polypeptide is Enolase (Salinispora tropica (strain ATCC BAA-916 / DSM 44818 / JCM 13857 / NBRC 105044 / CNB-440)).